The following is an 883-amino-acid chain: Alanine--tRNA ligase (883 aa).

4 residues coordinate Zn(2+): His560, His564, Cys665, and His669.

This sequence belongs to the class-II aminoacyl-tRNA synthetase family. The cofactor is Zn(2+).

The protein localises to the cytoplasm. The catalysed reaction is tRNA(Ala) + L-alanine + ATP = L-alanyl-tRNA(Ala) + AMP + diphosphate. Functionally, catalyzes the attachment of alanine to tRNA(Ala) in a two-step reaction: alanine is first activated by ATP to form Ala-AMP and then transferred to the acceptor end of tRNA(Ala). Also edits incorrectly charged Ser-tRNA(Ala) and Gly-tRNA(Ala) via its editing domain. The chain is Alanine--tRNA ligase from Mesomycoplasma hyopneumoniae (strain 232) (Mycoplasma hyopneumoniae).